Reading from the N-terminus, the 388-residue chain is Serpin B11 (388 aa).

The tract at residues 338–362 is RCL; sequence EEGTEAAAATGESISVKRLPVTVQF.

The protein belongs to the serpin family. Ov-serpin subfamily. As to expression, expressed in eye, lung, lymphocytes, thymus, stomach, uterus, heart, brain, liver, skeletal muscle, and in day 7, 15, and 17 embryos.

The protein localises to the cytoplasm. Inhibitor of serine proteases. Has moderate inhibitory activity for trypsin-like peptidases, but also some activity with cysteine peptidases, cathepsin L, K, and V, and the serine peptidase, tryptase gamma. In Mus musculus (Mouse), this protein is Serpin B11 (Serpinb11).